The sequence spans 129 residues: MYKTGILNSDISKLLSDLGHTDEIMIADCGLPIPNGVKKIDLALDFGKPSFLDVFHIVKSHMAIEKMTLASEMKTENESLYNVLKEEEIKFTTESHELLKQHSKHVKAIIRTGEAKPYANVILASDVLF.

His20 (proton donor) is an active-site residue. Substrate contacts are provided by residues Asp28, His96, and 118–120; that span reads YAN.

The protein belongs to the RbsD / FucU family. RbsD subfamily. In terms of assembly, homodecamer.

It is found in the cytoplasm. The catalysed reaction is beta-D-ribopyranose = beta-D-ribofuranose. It functions in the pathway carbohydrate metabolism; D-ribose degradation; D-ribose 5-phosphate from beta-D-ribopyranose: step 1/2. Its function is as follows. Catalyzes the interconversion of beta-pyran and beta-furan forms of D-ribose. This chain is D-ribose pyranase, found in Staphylococcus saprophyticus subsp. saprophyticus (strain ATCC 15305 / DSM 20229 / NCIMB 8711 / NCTC 7292 / S-41).